Here is a 216-residue protein sequence, read N- to C-terminus: Snake venom metalloproteinase HT-1 (216 aa).

A Disintegrin domain is found at proline 8 to asparagine 94. Ca(2+) contacts are provided by valine 10, asparagine 13, leucine 15, glutamate 17, glutamate 20, and aspartate 23. Disulfide bonds link cysteine 11–cysteine 40, cysteine 22–cysteine 35, cysteine 24–cysteine 30, cysteine 34–cysteine 57, cysteine 48–cysteine 54, cysteine 53–cysteine 79, cysteine 66–cysteine 86, cysteine 73–cysteine 105, cysteine 98–cysteine 110, cysteine 117–cysteine 167, cysteine 132–cysteine 178, cysteine 145–cysteine 155, cysteine 162–cysteine 204, and cysteine 198–cysteine 209. The short motif at glutamate 72–aspartate 74 is the D/ECD-tripeptide element. Asparagine 175 carries an N-linked (GlcNAc...) asparagine glycan.

Belongs to the venom metalloproteinase (M12B) family. P-III subfamily. P-IIIa sub-subfamily. As to quaternary structure, monomer. Zn(2+) is required as a cofactor. As to expression, expressed by the venom gland.

It is found in the secreted. Zinc protease from snake venom that induces hemorrhage. The sequence is that of Snake venom metalloproteinase HT-1 from Crotalus ruber ruber (Red diamond rattlesnake).